An 88-amino-acid chain; its full sequence is Small ribosomal subunit protein uS19 (88 aa).

This sequence belongs to the universal ribosomal protein uS19 family.

Functionally, protein S19 forms a complex with S13 that binds strongly to the 16S ribosomal RNA. The chain is Small ribosomal subunit protein uS19 from Mycoplasma mycoides subsp. mycoides SC (strain CCUG 32753 / NCTC 10114 / PG1).